We begin with the raw amino-acid sequence, 166 residues long: NADH-quinone oxidoreductase subunit E (166 aa).

Cys92, Cys97, Cys133, and Cys137 together coordinate [2Fe-2S] cluster.

The protein belongs to the complex I 24 kDa subunit family. Composed of 13 different subunits. Subunits NuoCD, E, F, and G constitute the peripheral sector of the complex. [2Fe-2S] cluster serves as cofactor.

It catalyses the reaction a quinone + NADH + 5 H(+)(in) = a quinol + NAD(+) + 4 H(+)(out). In terms of biological role, NDH-1 shuttles electrons from NADH, via FMN and iron-sulfur (Fe-S) centers, to quinones in the respiratory chain. The immediate electron acceptor for the enzyme in this species is believed to be ubiquinone. Couples the redox reaction to proton translocation (for every two electrons transferred, four hydrogen ions are translocated across the cytoplasmic membrane), and thus conserves the redox energy in a proton gradient. In Pseudomonas aeruginosa (strain ATCC 15692 / DSM 22644 / CIP 104116 / JCM 14847 / LMG 12228 / 1C / PRS 101 / PAO1), this protein is NADH-quinone oxidoreductase subunit E (nuoE).